The chain runs to 322 residues: Short-chain dehydrogenase TIC 32, chloroplastic (322 aa).

Residues G36 to G42, D88 to L89, N115, and T136 contribute to the NADP(+) site. Residue S170 participates in substrate binding. Y192 functions as the Proton acceptor in the catalytic mechanism. An interaction with calmodulin region spans residues D298 to D314.

Belongs to the short-chain dehydrogenases/reductases (SDR) family. As to quaternary structure, part of the Tic complex. Interacts with TIC110. As to expression, expressed in leaves and roots.

It localises to the plastid. The protein localises to the chloroplast inner membrane. Functionally, involved in protein precursor import into chloroplasts. Part of the redox regulon consisting of TIC32, TIC 55 and TIC62. The protein is Short-chain dehydrogenase TIC 32, chloroplastic of Arabidopsis thaliana (Mouse-ear cress).